The sequence spans 284 residues: Nucleotide-binding protein SPO0713 (284 aa).

3-10 (GPSGAGRS) contributes to the ATP binding site. Residue 50–53 (DARN) participates in GTP binding.

Belongs to the RapZ-like family.

Displays ATPase and GTPase activities. This is Nucleotide-binding protein SPO0713 from Ruegeria pomeroyi (strain ATCC 700808 / DSM 15171 / DSS-3) (Silicibacter pomeroyi).